The following is a 550-amino-acid chain: Glucose-6-phosphate isomerase 1 (550 aa).

Catalysis depends on Glu353, which acts as the Proton donor. Active-site residues include His384 and Lys512.

It belongs to the GPI family.

The protein localises to the cytoplasm. The enzyme catalyses alpha-D-glucose 6-phosphate = beta-D-fructose 6-phosphate. Its pathway is carbohydrate biosynthesis; gluconeogenesis. It participates in carbohydrate degradation; glycolysis; D-glyceraldehyde 3-phosphate and glycerone phosphate from D-glucose: step 2/4. Its function is as follows. Catalyzes the reversible isomerization of glucose-6-phosphate to fructose-6-phosphate. In Thiobacillus denitrificans (strain ATCC 25259 / T1), this protein is Glucose-6-phosphate isomerase 1.